The following is a 43-amino-acid chain: Alpha-1-antiproteinase 4 (43 aa).

This sequence belongs to the serpin family. N-glycosylated with carbohydrates having biantennary side chains. Plasma.

It localises to the secreted. The protein is Alpha-1-antiproteinase 4 of Equus caballus (Horse).